Consider the following 362-residue polypeptide: UDP-N-acetylglucosamine--N-acetylmuramyl-(pentapeptide) pyrophosphoryl-undecaprenol N-acetylglucosamine transferase (362 aa).

UDP-N-acetyl-alpha-D-glucosamine-binding positions include 15–17, N127, R165, S191, I247, 266–271, and Q292; these read TGG and ALTVSE.

Belongs to the glycosyltransferase 28 family. MurG subfamily.

Its subcellular location is the cell inner membrane. It carries out the reaction di-trans,octa-cis-undecaprenyl diphospho-N-acetyl-alpha-D-muramoyl-L-alanyl-D-glutamyl-meso-2,6-diaminopimeloyl-D-alanyl-D-alanine + UDP-N-acetyl-alpha-D-glucosamine = di-trans,octa-cis-undecaprenyl diphospho-[N-acetyl-alpha-D-glucosaminyl-(1-&gt;4)]-N-acetyl-alpha-D-muramoyl-L-alanyl-D-glutamyl-meso-2,6-diaminopimeloyl-D-alanyl-D-alanine + UDP + H(+). It functions in the pathway cell wall biogenesis; peptidoglycan biosynthesis. In terms of biological role, cell wall formation. Catalyzes the transfer of a GlcNAc subunit on undecaprenyl-pyrophosphoryl-MurNAc-pentapeptide (lipid intermediate I) to form undecaprenyl-pyrophosphoryl-MurNAc-(pentapeptide)GlcNAc (lipid intermediate II). In Shewanella baltica (strain OS185), this protein is UDP-N-acetylglucosamine--N-acetylmuramyl-(pentapeptide) pyrophosphoryl-undecaprenol N-acetylglucosamine transferase.